The primary structure comprises 484 residues: MPISDFQVVIGLEVHAQLLTASKIFCGCSTAFGGAPNAHTCPVCLGLPGALPALNRSVVEMAVRTGLALGCEIRPKSVFARKNYFYPDLPKGYQISQYELPICEGGEVTFTLDGRDHTARLVRIHMEEDAGKNVHDVAADGSSGVDLNRAGVPLVEIVSRPDLRSAEEAVEYLKALRAILMALGVNDGNMQEGSLRCDANVSVMRKGASELGTRCEIKNMNSFRFLKQAIEFEARRQVELIEAGEPVVQETRLFDPDRGETRSMRSKEEAHDYRYFPEPDLPPVIVEAALVERLRGELPELPRAKAERYQRSLGLSAQDAGNLVADAAVSAWFDAAVAAYGAGPEAAKKVANWVIGELARLANETGEAPAAWKLTPARLAAVLRLIDAGTIGGPGAKQVVEEVFRTGAEPDAVVKAKGLAQVSDEGAIEAAVDKVLAANPGEVEKYRGGRKNLVGFFVGQVMKEMRGKGNPAVVNALLRRKLGD.

Belongs to the GatB/GatE family. GatB subfamily. As to quaternary structure, heterotrimer of A, B and C subunits.

The enzyme catalyses L-glutamyl-tRNA(Gln) + L-glutamine + ATP + H2O = L-glutaminyl-tRNA(Gln) + L-glutamate + ADP + phosphate + H(+). The catalysed reaction is L-aspartyl-tRNA(Asn) + L-glutamine + ATP + H2O = L-asparaginyl-tRNA(Asn) + L-glutamate + ADP + phosphate + 2 H(+). Functionally, allows the formation of correctly charged Asn-tRNA(Asn) or Gln-tRNA(Gln) through the transamidation of misacylated Asp-tRNA(Asn) or Glu-tRNA(Gln) in organisms which lack either or both of asparaginyl-tRNA or glutaminyl-tRNA synthetases. The reaction takes place in the presence of glutamine and ATP through an activated phospho-Asp-tRNA(Asn) or phospho-Glu-tRNA(Gln). The chain is Aspartyl/glutamyl-tRNA(Asn/Gln) amidotransferase subunit B from Anaeromyxobacter dehalogenans (strain 2CP-C).